Reading from the N-terminus, the 298-residue chain is 3-sulfolactaldehyde reductase (298 aa).

NAD(+) contacts are provided by residues 11-12 (QM), Asp-31, Leu-65, and Thr-96. Arg-123 contacts 2,3-dihydroxypropane-1-sulfonate. Lys-171 is an active-site residue. 174 to 178 (NNYMS) is a 2,3-dihydroxypropane-1-sulfonate binding site. Lys-240 provides a ligand contact to NAD(+).

This sequence belongs to the HIBADH-related family. 3-sulfolactaldehyde reductase subfamily. In terms of assembly, homotetramer. Dimer of dimers.

It catalyses the reaction (2S)-3-sulfopropanediol + NAD(+) = (2S)-3-sulfolactaldehyde + NADH + H(+). The enzyme catalyses 4-hydroxybutanoate + NAD(+) = succinate semialdehyde + NADH + H(+). Its activity is regulated as follows. Inhibited by the NADH analogs tetrahydro-NADH and hexahydro-NADH. In terms of biological role, reduces 3-sulfolactaldehyde (SLA) to 2,3-dihydroxypropane 1-sulfonate (DHPS). Metabolite profiling studies showed that the enzyme also catalyzes in vitro the NADH-dependent reduction of succinic semialdehyde (SSA) to 4-hydroxybutyrate (GHB), and that it could be involved in the metabolism of SSA, and other potentially toxic intermediates that may accumulate under stress conditions. However, the enzyme exhibits a 42,000-fold greater catalytic efficiency for the reduction of SLA over SSA. Shows no detectable activity on the analogous glycolytic intermediate glyceraldehyde-3-phosphate. This Escherichia coli (strain K12) protein is 3-sulfolactaldehyde reductase (yihU).